An 83-amino-acid chain; its full sequence is Small ribosomal subunit protein uS17 (83 aa).

This sequence belongs to the universal ribosomal protein uS17 family. In terms of assembly, part of the 30S ribosomal subunit.

One of the primary rRNA binding proteins, it binds specifically to the 5'-end of 16S ribosomal RNA. This chain is Small ribosomal subunit protein uS17, found in Synechococcus sp. (strain RCC307).